Here is a 247-residue protein sequence, read N- to C-terminus: ATP synthase subunit a, chloroplastic (247 aa).

5 helical membrane-spanning segments follow: residues 38-58 (QVLITSWVVIAILLGSATLAV), 95-115 (VPFIGTMFLFIFVSNWSGALL), 134-154 (INTTVALALLTSVAYFYAGLT), 199-219 (LVVVVLVSLVPSVVPIPVMFL), and 220-240 (GLFTSGIQALIFATLAAAYIG).

It belongs to the ATPase A chain family. F-type ATPases have 2 components, CF(1) - the catalytic core - and CF(0) - the membrane proton channel. CF(1) has five subunits: alpha(3), beta(3), gamma(1), delta(1), epsilon(1). CF(0) has four main subunits: a, b, b' and c.

The protein resides in the plastid. It is found in the chloroplast thylakoid membrane. Functionally, key component of the proton channel; it plays a direct role in the translocation of protons across the membrane. The polypeptide is ATP synthase subunit a, chloroplastic (Guizotia abyssinica (Niger)).